Consider the following 168-residue polypeptide: 3-isopropylmalate dehydratase small subunit 2 (168 aa).

The protein belongs to the LeuD family. LeuD type 2 subfamily. In terms of assembly, heterodimer of LeuC and LeuD.

It carries out the reaction (2R,3S)-3-isopropylmalate = (2S)-2-isopropylmalate. Its pathway is amino-acid biosynthesis; L-leucine biosynthesis; L-leucine from 3-methyl-2-oxobutanoate: step 2/4. Catalyzes the isomerization between 2-isopropylmalate and 3-isopropylmalate, via the formation of 2-isopropylmaleate. This Methanopyrus kandleri (strain AV19 / DSM 6324 / JCM 9639 / NBRC 100938) protein is 3-isopropylmalate dehydratase small subunit 2 (leuD2).